Here is a 61-residue protein sequence, read N- to C-terminus: Acetylcholinesterase toxin C (61 aa).

Disulfide bonds link cysteine 3–cysteine 22, cysteine 17–cysteine 39, cysteine 41–cysteine 52, and cysteine 53–cysteine 59.

Belongs to the three-finger toxin family. Short-chain subfamily. Acn-esterase inhibitor sub-subfamily. Expressed by the venom gland.

It is found in the secreted. Inhibits acetylcholinesterase. The polypeptide is Acetylcholinesterase toxin C (Dendroaspis polylepis polylepis (Black mamba)).